A 987-amino-acid polypeptide reads, in one-letter code: Valine--tRNA ligase (987 aa).

The 'HIGH' region signature appears at 45–55; that stretch reads PNVTGSLHMGH. A 'KMSKS' region motif is present at residues 634–638; the sequence is KMSKS. Residue lysine 637 coordinates ATP. Residues 917–985 adopt a coiled-coil conformation; the sequence is VIDIGAEKAR…LSAALARLSE (69 aa).

The protein belongs to the class-I aminoacyl-tRNA synthetase family. ValS type 1 subfamily. Monomer.

It localises to the cytoplasm. The catalysed reaction is tRNA(Val) + L-valine + ATP = L-valyl-tRNA(Val) + AMP + diphosphate. Its function is as follows. Catalyzes the attachment of valine to tRNA(Val). As ValRS can inadvertently accommodate and process structurally similar amino acids such as threonine, to avoid such errors, it has a 'posttransfer' editing activity that hydrolyzes mischarged Thr-tRNA(Val) in a tRNA-dependent manner. The sequence is that of Valine--tRNA ligase from Cereibacter sphaeroides (strain ATCC 17023 / DSM 158 / JCM 6121 / CCUG 31486 / LMG 2827 / NBRC 12203 / NCIMB 8253 / ATH 2.4.1.) (Rhodobacter sphaeroides).